The primary structure comprises 155 residues: Xanthine-guanine phosphoribosyltransferase (155 aa).

5-phospho-alpha-D-ribose 1-diphosphate contacts are provided by residues 37-38, Arg69, and 90-98; these read RG and EDLVDTGTT. Arg69 lines the GMP pocket. Asp91 lines the Mg(2+) pocket. Positions 94 and 137 each coordinate guanine. Residues Asp94 and Ile137 each coordinate xanthine. Residues 94–98 and 136–137 contribute to the GMP site; these read DTGTT and WI.

The protein belongs to the purine/pyrimidine phosphoribosyltransferase family. XGPT subfamily. In terms of assembly, homotetramer. The cofactor is Mg(2+).

It localises to the cell inner membrane. It carries out the reaction GMP + diphosphate = guanine + 5-phospho-alpha-D-ribose 1-diphosphate. The enzyme catalyses XMP + diphosphate = xanthine + 5-phospho-alpha-D-ribose 1-diphosphate. It catalyses the reaction IMP + diphosphate = hypoxanthine + 5-phospho-alpha-D-ribose 1-diphosphate. It functions in the pathway purine metabolism; GMP biosynthesis via salvage pathway; GMP from guanine: step 1/1. It participates in purine metabolism; XMP biosynthesis via salvage pathway; XMP from xanthine: step 1/1. Its function is as follows. Purine salvage pathway enzyme that catalyzes the transfer of the ribosyl-5-phosphate group from 5-phospho-alpha-D-ribose 1-diphosphate (PRPP) to the N9 position of the 6-oxopurines guanine and xanthine to form the corresponding ribonucleotides GMP (guanosine 5'-monophosphate) and XMP (xanthosine 5'-monophosphate), with the release of PPi. To a lesser extent, also acts on hypoxanthine. This chain is Xanthine-guanine phosphoribosyltransferase, found in Aeromonas hydrophila subsp. hydrophila (strain ATCC 7966 / DSM 30187 / BCRC 13018 / CCUG 14551 / JCM 1027 / KCTC 2358 / NCIMB 9240 / NCTC 8049).